Here is a 638-residue protein sequence, read N- to C-terminus: 1-deoxy-D-xylulose-5-phosphate synthase (638 aa).

Thiamine diphosphate contacts are provided by residues His-72 and 113 to 115 (GHA). Asp-144 provides a ligand contact to Mg(2+). Thiamine diphosphate-binding positions include 145–146 (GA), Asn-174, Tyr-287, and Glu-370. A Mg(2+)-binding site is contributed by Asn-174.

It belongs to the transketolase family. DXPS subfamily. As to quaternary structure, homodimer. Requires Mg(2+) as cofactor. Thiamine diphosphate serves as cofactor.

It carries out the reaction D-glyceraldehyde 3-phosphate + pyruvate + H(+) = 1-deoxy-D-xylulose 5-phosphate + CO2. It participates in metabolic intermediate biosynthesis; 1-deoxy-D-xylulose 5-phosphate biosynthesis; 1-deoxy-D-xylulose 5-phosphate from D-glyceraldehyde 3-phosphate and pyruvate: step 1/1. In terms of biological role, catalyzes the acyloin condensation reaction between C atoms 2 and 3 of pyruvate and glyceraldehyde 3-phosphate to yield 1-deoxy-D-xylulose-5-phosphate (DXP). This chain is 1-deoxy-D-xylulose-5-phosphate synthase, found in Picosynechococcus sp. (strain ATCC 27264 / PCC 7002 / PR-6) (Agmenellum quadruplicatum).